Consider the following 292-residue polypeptide: Small ribosomal subunit protein uS5 (292 aa).

The interval 1 to 56 (MADDAGAAGGPGGPGGPGMGGRGGFRGGFGSGIRGRGRGRGRGRGRGRGARGGKAE) is disordered. A2 carries the post-translational modification N-acetylalanine. Residues 7–34 (AAGGPGGPGGPGMGGRGGFRGGFGSGIR) are compositionally biased toward gly residues. Basic residues predominate over residues 35–51 (GRGRGRGRGRGRGRGAR). Glycyl lysine isopeptide (Lys-Gly) (interchain with G-Cter in ubiquitin) cross-links involve residues K54 and K58. Residues 102–165 (LKDEVLKIMP…ILAKLSIVPV (64 aa)) enclose the S5 DRBM domain. T251 carries the phosphothreonine modification. K262 bears the N6-acetyllysine mark. A Phosphoserine modification is found at S263. T269 carries the post-translational modification Phosphothreonine. N6-acetyllysine; alternate is present on K274. Residue K274 forms a Glycyl lysine isopeptide (Lys-Gly) (interchain with G-Cter in SUMO1); alternate linkage. Residue K274 forms a Glycyl lysine isopeptide (Lys-Gly) (interchain with G-Cter in SUMO2); alternate linkage. Residue K274 forms a Glycyl lysine isopeptide (Lys-Gly) (interchain with G-Cter in ubiquitin); alternate linkage. A Phosphoserine modification is found at S280.

This sequence belongs to the universal ribosomal protein uS5 family. In terms of assembly, component of the small ribosomal subunit. Interacts with zinc finger protein ZNF277 (via zinc-finger domains); the interaction is direct; the interaction is extra-ribosomal. Interaction with ZNF277 competes with the binding of RPS2 to protein arginine methyltransferase PRMT3. Post-translationally, citrullinated by PADI4 in the Arg/Gly-rich region. In terms of processing, asymmetric arginine dimethylation by PRMT3 occurs at multiple sites in the Arg/Gly-rich region. Monoubiquitinated at Lys-54 and Lys-58 by RNF10 when a ribosome has stalled during translation, leading to its degradation by the proteasome. Deubiquitinated at Lys-54 and Lys-58 by USP10, preventing degradation by the proteasome and promoting 40S ribosome subunit recycling following ribosome dissociation.

It localises to the cytoplasm. The protein localises to the nucleus. It is found in the nucleolus. Functionally, component of the ribosome, a large ribonucleoprotein complex responsible for the synthesis of proteins in the cell. The small ribosomal subunit (SSU) binds messenger RNAs (mRNAs) and translates the encoded message by selecting cognate aminoacyl-transfer RNA (tRNA) molecules. The large subunit (LSU) contains the ribosomal catalytic site termed the peptidyl transferase center (PTC), which catalyzes the formation of peptide bonds, thereby polymerizing the amino acids delivered by tRNAs into a polypeptide chain. The nascent polypeptides leave the ribosome through a tunnel in the LSU and interact with protein factors that function in enzymatic processing, targeting, and the membrane insertion of nascent chains at the exit of the ribosomal tunnel. Plays a role in the assembly and function of the 40S ribosomal subunit. This chain is Small ribosomal subunit protein uS5 (RPS2), found in Oryctolagus cuniculus (Rabbit).